An 88-amino-acid chain; its full sequence is Small ribosomal subunit protein bS20 (88 aa).

This sequence belongs to the bacterial ribosomal protein bS20 family. In terms of assembly, part of the 30S ribosomal subunit.

In terms of biological role, binds directly to 16S ribosomal RNA. This chain is Small ribosomal subunit protein bS20 (rpsT), found in Bacillus subtilis (strain 168).